Here is a 214-residue protein sequence, read N- to C-terminus: Probable nicotinate-nucleotide adenylyltransferase (214 aa).

It belongs to the NadD family.

The enzyme catalyses nicotinate beta-D-ribonucleotide + ATP + H(+) = deamido-NAD(+) + diphosphate. It functions in the pathway cofactor biosynthesis; NAD(+) biosynthesis; deamido-NAD(+) from nicotinate D-ribonucleotide: step 1/1. Its function is as follows. Catalyzes the reversible adenylation of nicotinate mononucleotide (NaMN) to nicotinic acid adenine dinucleotide (NaAD). In Thermomicrobium roseum (strain ATCC 27502 / DSM 5159 / P-2), this protein is Probable nicotinate-nucleotide adenylyltransferase.